The primary structure comprises 389 residues: Large envelope protein (389 aa).

Position 1 is an N-acetylmethionine (methionine 1). The N-myristoyl glycine; by host moiety is linked to residue glycine 2. Residues 2–108 form a pre-S1 region; it reads GTNLSVPNPL…PPLRDTHPQA (107 aa). The interval 2–163 is pre-S; it reads GTNLSVPNPL…LSKTGDPVPN (162 aa). The Virion surface; in external conformation segment spans residues 2 to 170; it reads GTNLSVPNPL…VPNMENIASG (169 aa). Over 2–242 the chain is Intravirion; in internal conformation; it reads GTNLSVPNPL…PGYRWMCLRR (241 aa). The segment at 74 to 103 is disordered; it reads LTTVPAAPPPASTNRQSGRQPTPLSPPLRD. Positions 85 to 95 are enriched in polar residues; sequence STNRQSGRQPT. Residues 109 to 163 form a pre-S2 region; the sequence is MQWNSTTFHQTLQDPGVRALYFPAGGSSSGTVSPAQNTVSAISSILSKTGDPVPN. Residues 171–191 traverse the membrane as a helical segment; that stretch reads LLGPLLVLQAGFFLLTKILTI. Topologically, residues 192–242 are intravirion; in external conformation; the sequence is PQSLDSWWTSLNFLGGTPVCLGQNSQSQISSHSPTCCPPICPGYRWMCLRR. The chain crosses the membrane as a helical span at residues 243 to 263; the sequence is FIIFLCILLLCLIFLLVLLDY. At 264–337 the chain is on the virion surface side; sequence QGMLPVCPLI…WASVRFSWLS (74 aa). An N-linked (GlcNAc...) asparagine; by host glycan is attached at asparagine 309. A helical membrane pass occupies residues 338 to 358; sequence LLVPFVQWFVGLSPTVWLSVI. Over 359–364 the chain is Intravirion; it reads WMIWFW. Residues 365 to 387 traverse the membrane as a helical segment; it reads GPSLYNILSPFMPLLPIFFCLWV. At 388–389 the chain is on the virion surface side; the sequence is YI.

The protein belongs to the orthohepadnavirus major surface antigen family. In terms of assembly, interacts (via its myristoylated pre-S1 region) with the host SLC10A1/NTCP; this interaction is essential for viral entry. As to quaternary structure, in its internal form (Li-HBsAg), interacts with the capsid protein and with the isoform S. Interacts with host chaperone CANX. Associates with host chaperone CANX through its pre-S2 N glycan; this association may be essential for isoform M proper secretion. In terms of assembly, interacts with isoform L. Interacts with the antigens of satellite virus HDV (HDVAgs); this interaction is required for encapsidation of HDV genomic RNA. In terms of processing, isoform M is N-terminally acetylated by host at a ratio of 90%, and N-glycosylated by host at the pre-S2 region. Post-translationally, myristoylated; this modification is essential for its interaction with the host protein SLC10A1/NTCP.

Its subcellular location is the virion membrane. Functionally, the large envelope protein exists in two topological conformations, one which is termed 'external' or Le-HBsAg and the other 'internal' or Li-HBsAg. In its external conformation the protein attaches the virus to cell receptors and thereby initiating infection. This interaction determines the species specificity and liver tropism. This attachment induces virion internalization predominantly through caveolin-mediated endocytosis. The large envelope protein also assures fusion between virion membrane and endosomal membrane. In its internal conformation the protein plays a role in virion morphogenesis and mediates the contact with the nucleocapsid like a matrix protein. Its function is as follows. The middle envelope protein plays an important role in the budding of the virion. It is involved in the induction of budding in a nucleocapsid independent way. In this process the majority of envelope proteins bud to form subviral lipoprotein particles of 22 nm of diameter that do not contain a nucleocapsid. The chain is Large envelope protein from Hepatitis B virus genotype B/C subtype adw (isolate Okinawa/pODW282/1998) (HBV-B).